Consider the following 176-residue polypeptide: Isopentenyl-diphosphate Delta-isomerase (176 aa).

Mn(2+)-binding residues include H23 and H29. A Nudix hydrolase domain is found at 27 to 161 (LRHLAISVFV…PERFTPWLKI (135 aa)). C63 is an active-site residue. C63 is a Mg(2+) binding site. Position 65 (H65) interacts with Mn(2+). A Mg(2+)-binding site is contributed by E83. Mn(2+) is bound by residues E109 and E111. The active site involves E111.

It belongs to the IPP isomerase type 1 family. Mg(2+) is required as a cofactor. It depends on Mn(2+) as a cofactor.

Its subcellular location is the cytoplasm. The catalysed reaction is isopentenyl diphosphate = dimethylallyl diphosphate. It participates in isoprenoid biosynthesis; dimethylallyl diphosphate biosynthesis; dimethylallyl diphosphate from isopentenyl diphosphate: step 1/1. It functions in the pathway porphyrin-containing compound metabolism; chlorophyll biosynthesis. Catalyzes the 1,3-allylic rearrangement of the homoallylic substrate isopentenyl (IPP) to its highly electrophilic allylic isomer, dimethylallyl diphosphate (DMAPP). This Rhodobacter capsulatus (strain ATCC BAA-309 / NBRC 16581 / SB1003) protein is Isopentenyl-diphosphate Delta-isomerase.